We begin with the raw amino-acid sequence, 813 residues long: Protein PPP4R3C1 (813 aa).

The tract at residues 730 to 813 is disordered; sequence NESESAIEGQ…PPPKRPNLST (84 aa). Residues 777–788 are compositionally biased toward acidic residues; that stretch reads YDTDDENDDDPY.

Belongs to the SMEK family.

The polypeptide is Protein PPP4R3C1 (Mus musculus (Mouse)).